Reading from the N-terminus, the 329-residue chain is 4-hydroxythreonine-4-phosphate dehydrogenase (329 aa).

The substrate site is built by H136 and T137. A divalent metal cation contacts are provided by H166, H211, and H266. Substrate-binding residues include K274, N283, and R292.

It belongs to the PdxA family. Homodimer. It depends on Zn(2+) as a cofactor. Mg(2+) serves as cofactor. The cofactor is Co(2+).

The protein resides in the cytoplasm. It carries out the reaction 4-(phosphooxy)-L-threonine + NAD(+) = 3-amino-2-oxopropyl phosphate + CO2 + NADH. Its pathway is cofactor biosynthesis; pyridoxine 5'-phosphate biosynthesis; pyridoxine 5'-phosphate from D-erythrose 4-phosphate: step 4/5. Catalyzes the NAD(P)-dependent oxidation of 4-(phosphooxy)-L-threonine (HTP) into 2-amino-3-oxo-4-(phosphooxy)butyric acid which spontaneously decarboxylates to form 3-amino-2-oxopropyl phosphate (AHAP). The chain is 4-hydroxythreonine-4-phosphate dehydrogenase from Escherichia fergusonii (strain ATCC 35469 / DSM 13698 / CCUG 18766 / IAM 14443 / JCM 21226 / LMG 7866 / NBRC 102419 / NCTC 12128 / CDC 0568-73).